A 309-amino-acid polypeptide reads, in one-letter code: Glycine-rich RNA-binding protein 3, mitochondrial (309 aa).

The transit peptide at 1–37 (MAFLSKFGNILKQTTNKQLNAQVSLSSPSLFQAIRCM) directs the protein to the mitochondrion. The 79-residue stretch at 40–118 (SKLFIGGMAY…RVVKVNYAND (79 aa)) folds into the RRM domain. A disordered region spans residues 247–309 (FAGDSQFGGS…GEFEDVAKRA (63 aa)). Positions 258-273 (VGNSSQFGGDNTQFTA) are enriched in polar residues.

This sequence belongs to the GR-RBP family. In terms of assembly, homodimer. Interacts with ORRM2 and MORF8/RIP1. Interacts with RBG5/ORRM4. Binds to RBG2/ORRM5.

The protein localises to the mitochondrion. Possibly has a role in RNA transcription or processing during stress. Involved in C-to-U editing of mitochondrial RNA. Functions as a minor mitochondrial editing factor. Controls 6 percent of the mitochondrial editing sites. The polypeptide is Glycine-rich RNA-binding protein 3, mitochondrial (Arabidopsis thaliana (Mouse-ear cress)).